A 219-amino-acid polypeptide reads, in one-letter code: Cytidylate kinase (219 aa).

Residue 21–29 (GPAASGKGT) coordinates ATP.

Belongs to the cytidylate kinase family. Type 1 subfamily.

It localises to the cytoplasm. It catalyses the reaction CMP + ATP = CDP + ADP. The catalysed reaction is dCMP + ATP = dCDP + ADP. The sequence is that of Cytidylate kinase from Rickettsia felis (strain ATCC VR-1525 / URRWXCal2) (Rickettsia azadi).